Here is a 98-residue protein sequence, read N- to C-terminus: UPF0235 protein APJL_1398 (98 aa).

Belongs to the UPF0235 family.

This chain is UPF0235 protein APJL_1398, found in Actinobacillus pleuropneumoniae serotype 3 (strain JL03).